A 130-amino-acid chain; its full sequence is Ribosome-binding factor A (130 aa).

Belongs to the RbfA family. Monomer. Binds 30S ribosomal subunits, but not 50S ribosomal subunits or 70S ribosomes.

The protein localises to the cytoplasm. One of several proteins that assist in the late maturation steps of the functional core of the 30S ribosomal subunit. Associates with free 30S ribosomal subunits (but not with 30S subunits that are part of 70S ribosomes or polysomes). Required for efficient processing of 16S rRNA. May interact with the 5'-terminal helix region of 16S rRNA. This chain is Ribosome-binding factor A, found in Pseudomonas aeruginosa (strain LESB58).